The sequence spans 69 residues: Brevinin-1CG1 (69 aa).

An N-terminal signal peptide occupies residues 1-22 (MFTMKKSLLLLFFLGTINLSLC). Positions 23 to 43 (EQERNAEEERRDDDEMDVEVE) are cleaved as a propeptide — removed in mature form. A disulfide bridge links Cys-63 with Cys-69.

In terms of tissue distribution, expressed by the skin glands.

The protein localises to the secreted. Functionally, antimicrobial peptide. Active against Gram-positive bacteria R.rhodochrous X15 and B.licheniformis X39 and against Gram-negative bacterium E.coli ATCC 25922. Has antifungal activity against a slime mold isolate. Has weak hemolytic activity against human erythrocytes. This Amolops chunganensis (Chungan torrent frog) protein is Brevinin-1CG1.